Consider the following 338-residue polypeptide: Methionine import ATP-binding protein MetN 1 (338 aa).

The ABC transporter domain maps to 2 to 241 (IELHQVSKSF…AKHATTKRFV (240 aa)). ATP is bound at residue 38-45 (GYSGAGKS).

Belongs to the ABC transporter superfamily. Methionine importer (TC 3.A.1.24) family. As to quaternary structure, the complex is composed of two ATP-binding proteins (MetN), two transmembrane proteins (MetI) and a solute-binding protein (MetQ).

It is found in the cell membrane. It carries out the reaction L-methionine(out) + ATP + H2O = L-methionine(in) + ADP + phosphate + H(+). It catalyses the reaction D-methionine(out) + ATP + H2O = D-methionine(in) + ADP + phosphate + H(+). Functionally, part of the ABC transporter complex MetNIQ involved in methionine import. Responsible for energy coupling to the transport system. This is Methionine import ATP-binding protein MetN 1 from Listeria monocytogenes serovar 1/2a (strain ATCC BAA-679 / EGD-e).